The primary structure comprises 571 residues: uncharacterized protein (571 aa).

3 disordered regions span residues 71–128, 142–258, and 298–336; these read TNHY…RVTA, NKND…PQNE, and LNRQPETRRNCQCPEKQQTPPPEETQNAQENDDQQTTKR. Residues 88–113 show a composition bias toward polar residues; sequence PNRSGVSSPVNDGASSPTQRGGTTPA. Pro residues predominate over residues 168-184; it reads RGYPGPGPRGYPGPGPR. Residues 205-215 are compositionally biased toward low complexity; the sequence is QGPRRYSCPGP. Over residues 217–234 the composition is skewed to gly residues; it reads GYPGPGSSGRPDPGGGLQ. The segment covering 311–326 has biased composition (low complexity); sequence PEKQQTPPPEETQNAQ.

This is an uncharacterized protein from Drosophila melanogaster (Fruit fly).